An 898-amino-acid chain; its full sequence is Putative disease resistance protein At1g63350 (898 aa).

Positions 24–88 (VSYTHNLEKN…IESRVNDLLN (65 aa)) form a coiled coil. The NB-ARC domain occupies 137–440 (DQASTSEVEE…CEEIIDGSEG (304 aa)). 179–186 (GMGGVGKT) contributes to the ATP binding site. LRR repeat units lie at residues 516-537 (VVRR…LDCM), 538-559 (ELTT…FFNS), 562-584 (KLAV…ISEL), 586-608 (SLQY…QELK), 609-631 (KLIH…SCLH), and 632-654 (NLKV…KELE).

Belongs to the disease resistance NB-LRR family.

In terms of biological role, potential disease resistance protein. This chain is Putative disease resistance protein At1g63350, found in Arabidopsis thaliana (Mouse-ear cress).